The chain runs to 547 residues: MFS-type transporter ungB (547 aa).

14 helical membrane-spanning segments follow: residues 14–34 (LLVTISLCLTLFCVSLDETVL), 50–70 (DVGWYGSSYLFVFTATQMAWG), 80–100 (WVFLTGVTVFEVGSLVCGVSP), 111–131 (IAGLGAGSINAGAVLIISNTI), 138–158 (IYLGCLGVVHGVVSVLGPVIG), 169–189 (WCFFLNLPIGAITVLGIVFCL), 210–230 (LLGSAFFIPGILMLLLALEWG), 238–258 (SWRVILLFVLSAVALAVFAVV), 279–299 (LGLIGYIVGNSGGLFVFVYYL), 316–336 (LAILPTQLGMVAASLAGGILV), 343–363 (TPFLIVSSLLAVAGAGLLSSL), 366–386 (ASGLGSILGYQVVLSVGIGLG), 392–412 (VVPSVVCAPGDVVMAIATLCF), and 475–495 (AVSETFYVGVAMCALSLLGSA). The disordered stretch occupies residues 503–547 (PGHKEATEKVEGEGQGQGQQQEQDQGQGWGEVGESHALAHPTADK). A compositionally biased stretch (basic and acidic residues) spans 504 to 514 (GHKEATEKVEG).

It belongs to the major facilitator superfamily. TCR/Tet family.

Its subcellular location is the membrane. Functionally, MFS-type transporter; part of the gene cluster that mediates the biosynthesis of the unguisins, gamma-aminobutyric acid (GABA)-containing fungal cyclic heptapeptides with the amino acid sequence cyclo-(D-Ala1-D-Val2-L-Phe3-D-Val4-D-Ala5-D-Trp6-GABA7) for unguisin A and cyclo-(D-Ala1-D-Val2-L-Leu3-D-Val4-D-Ala5-D-Trp6-GABA7) for unguisin B. May be involved in the secretion of unguisins. The protein is MFS-type transporter ungB of Aspergillus violaceofuscus (strain CBS 115571).